Reading from the N-terminus, the 206-residue chain is Large ribosomal subunit protein uL4 (206 aa).

A disordered region spans residues 43–78 (ARSGNRKQKDREEVKHTTKKPWRQKGTGRARAGMSS). Residues 49-58 (KQKDREEVKH) are compositionally biased toward basic and acidic residues. Residues 59-70 (TTKKPWRQKGTG) are compositionally biased toward basic residues.

Belongs to the universal ribosomal protein uL4 family. In terms of assembly, part of the 50S ribosomal subunit.

One of the primary rRNA binding proteins, this protein initially binds near the 5'-end of the 23S rRNA. It is important during the early stages of 50S assembly. It makes multiple contacts with different domains of the 23S rRNA in the assembled 50S subunit and ribosome. Its function is as follows. Forms part of the polypeptide exit tunnel. The chain is Large ribosomal subunit protein uL4 from Ralstonia pickettii (strain 12J).